Consider the following 59-residue polypeptide: Cortexin domain containing 2 (59 aa).

The helical transmembrane segment at 20–40 (FAIAFVVLVFVFLIVMVFRCV) threads the bilayer.

The protein localises to the membrane. The chain is Cortexin domain containing 2 from Mus musculus (Mouse).